We begin with the raw amino-acid sequence, 377 residues long: UPF0754 membrane protein RBAM_010020 (377 aa).

A run of 2 helical transmembrane segments spans residues 1-21 (MGIA…GAVT) and 357-377 (YLGG…VILF).

This sequence belongs to the UPF0754 family.

The protein localises to the cell membrane. The sequence is that of UPF0754 membrane protein RBAM_010020 from Bacillus velezensis (strain DSM 23117 / BGSC 10A6 / LMG 26770 / FZB42) (Bacillus amyloliquefaciens subsp. plantarum).